The sequence spans 487 residues: L-tartrate/succinate antiporter (487 aa).

14 consecutive transmembrane segments (helical) span residues 10-30 (YLAPLAVIAIIALIPVPAGLE), 33-53 (TWLYFAVFTGVIVGLILEPVP), 54-74 (GAVVAMVGISIIAILSPWLLF), 93-113 (WAVSGFSNSVIWLIFAAFMFG), 137-157 (TLFLGYAVMFSELILAPVTPS), 189-209 (IGSYIMWIGIVADCVTSAIFL), 230-250 (LSWGDWFLGMLPLSILLVLLV), 292-312 (LMVGALVLWIFGGDYIDAAMV), 313-333 (GYSVVALMLLLRIISWDDIVS), 340-360 (VFFWLASLITLATGLNNTGFI), 370-390 (SLSGYSPTMVMVALIVVFYLL), 393-413 (FFASATAYTSALAPMMIAAAL), 418-438 (IPLPVFCLMVGAAIGLGSILT), and 465-485 (IFGLIFLVLLVITGLLWMPVV).

This sequence belongs to the SLC13A/DASS transporter (TC 2.A.47) family. DIT1 subfamily.

The protein resides in the cell inner membrane. The catalysed reaction is (2R,3R)-tartrate(out) + succinate(in) = (2R,3R)-tartrate(in) + succinate(out). Its function is as follows. Catalyzes the uptake of tartrate in exchange for intracellular succinate. Essential for anaerobic L-tartrate fermentation. The protein is L-tartrate/succinate antiporter (ttdT) of Shigella dysenteriae serotype 1 (strain Sd197).